Consider the following 39-residue polypeptide: Omega-theraphotoxin-Asp1a (39 aa).

3 disulfides stabilise this stretch: Cys-4-Cys-25, Cys-8-Cys-31, and Cys-17-Cys-36.

In terms of tissue distribution, expressed by the venom gland.

The protein localises to the secreted. Toxin that inhibits voltage-gated calcium channels in rat cerebellar granule cells (IC(50)&lt;200 nM). Is lethal to cockroaches. The chain is Omega-theraphotoxin-Asp1a from Aphonopelma sp. (American tarantula).